A 104-amino-acid chain; its full sequence is Large ribosomal subunit protein uL23 (104 aa).

Belongs to the universal ribosomal protein uL23 family. As to quaternary structure, part of the 50S ribosomal subunit. Contacts protein L29, and trigger factor when it is bound to the ribosome.

In terms of biological role, one of the early assembly proteins it binds 23S rRNA. One of the proteins that surrounds the polypeptide exit tunnel on the outside of the ribosome. Forms the main docking site for trigger factor binding to the ribosome. This Ralstonia pickettii (strain 12J) protein is Large ribosomal subunit protein uL23.